A 28-amino-acid polypeptide reads, in one-letter code: M-poneritoxin-Da4b (28 aa).

An Alanine amide modification is found at Ala-28.

As to expression, expressed by the venom gland.

The protein resides in the secreted. The synthetic peptide has antimicrobial activity against the Gram-positive bacteria B.amyloliquefacies S499 (MIC=0.05 mM), L.monocytogenes 2231 and S.aureus ATCC 29213, against the Gram-negative bacteria P.putida BTP1, P.aeruginosa PaO1 and E.coli ATCC 10536, and against the fungi S.cerevisiae, R.mucilaginosa and C.cucumerinum. It is not active against the fungi F.oxysporum and B.cinerea. The protein is M-poneritoxin-Da4b of Dinoponera australis (Giant neotropical hunting ant).